Consider the following 253-residue polypeptide: Dehydration-responsive element-binding protein 1D (253 aa).

Residues 1–22 are compositionally biased toward polar residues; it reads MEKNTAASGQLMTSSAEATPSS. The interval 1-31 is disordered; that stretch reads MEKNTAASGQLMTSSAEATPSSPKRPAGRTK. Residues 39-98 constitute a DNA-binding region (AP2/ERF); the sequence is VFRGVRWRGCAGRWVCKVRVPGSRGDRFWIGTSDTAEETARTHDAAMLALCGASASLNFA. The disordered stretch occupies residues 131-153; it reads RRVPAPGRGSTATATATSGDAAS. Residues 134–153 show a composition bias toward low complexity; sequence PAPGRGSTATATATSGDAAS.

This sequence belongs to the AP2/ERF transcription factor family. ERF subfamily.

The protein localises to the nucleus. Its function is as follows. Transcriptional activator that binds specifically to the DNA sequence 5'-[AG]CCGAC-3'. Binding to the C-repeat/DRE element mediates high salinity- and dehydration-inducible transcription. The chain is Dehydration-responsive element-binding protein 1D (DREB1D) from Oryza sativa subsp. indica (Rice).